A 479-amino-acid chain; its full sequence is MAQHTVYFPDAFLTQMREAMPSTLSFDDFLAACQRPLRRSIRVNTLKISVADFLQLTAPYGWTLTPIPWCEEGFWIERDNEDALPLGSTAEHLSGLFYIQEASSMLPVAALFADGNAPQRVMDVAAAPGSKTTQIAARMNNEGAILANEFSASRVKVLHANISRCGISNVALTHFDGRVFGAAVPEMFDAILLDAPCSGEGVVRKDPDALKNWSPESNQEIAATQRELIDSAFHALRPGGTLVYSTCTLNQEENEAVCLWLKETYPDAVEFLPLGDLFPGANKALTEEGFLHVFPQIYDCEGFFVARLRKTQAIPALPAPKYKVGNFPFSPVKDREAGQIRQAAADVGLNWDENLRLWQRDKELWLFPVGIEALIGKVRFSRLGIKLAETHNKGYRWQHEAVIALATPDNVNAFELTPQEAEEWYRGRDVYPQAAPVADDVLVTFQHQPIGLAKRIGSRLKNSYPRELVRDGKLFTGNA.

Residues 125–131, Glu149, Asp176, and Asp194 contribute to the S-adenosyl-L-methionine site; that span reads AAAPGSK. Cys247 functions as the Nucleophile in the catalytic mechanism.

This sequence belongs to the class I-like SAM-binding methyltransferase superfamily. RsmB/NOP family.

The protein localises to the cytoplasm. The catalysed reaction is cytidine(1407) in 16S rRNA + S-adenosyl-L-methionine = 5-methylcytidine(1407) in 16S rRNA + S-adenosyl-L-homocysteine + H(+). Specifically methylates the cytosine at position 1407 (m5C1407) of 16S rRNA. The chain is Ribosomal RNA small subunit methyltransferase F from Shigella boydii serotype 18 (strain CDC 3083-94 / BS512).